The following is a 306-amino-acid chain: Polyisoprenyl-teichoic acid--peptidoglycan teichoic acid transferase TagU (306 aa).

At 1–11 (MRNERRKKKKT) the chain is on the cytoplasmic side. Residues 12 to 32 (LLLTILTIIGLLVLGTGGYAY) traverse the membrane as a helical; Signal-anchor for type II membrane protein segment. At 33–306 (YLWHKAASTV…TKELKESLEK (274 aa)) the chain is on the extracellular side.

It belongs to the LytR/CpsA/Psr (LCP) family. As to quaternary structure, interacts with MreB. Interacts with FloT.

Its subcellular location is the cell membrane. The protein resides in the membrane raft. The protein operates within cell wall biogenesis. Its function is as follows. May catalyze the final step in cell wall teichoic acid biosynthesis, the transfer of the anionic cell wall polymers (APs) from their lipid-linked precursor to the cell wall peptidoglycan (PG). The chain is Polyisoprenyl-teichoic acid--peptidoglycan teichoic acid transferase TagU from Bacillus subtilis (strain 168).